The sequence spans 736 residues: DEAD-box ATP-dependent RNA helicase 21 (736 aa).

A coiled-coil region spans residues 14 to 38 (LTREEREKLALERRQAAVTDQRRSA). The span at 25 to 38 (ERRQAAVTDQRRSA) shows a compositional bias: basic and acidic residues. 2 disordered regions span residues 25–178 (ERRQ…PKKR) and 231–263 (KVAA…DKKE). The segment covering 46 to 58 (PRPPPPPPPPLSN) has biased composition (pro residues). Basic and acidic residues-rich tracts occupy residues 64-166 (SSSH…DAIK) and 231-252 (KVAA…GLDD). Residues 137–167 (DRDRERGDREKDRLEKMAEREREKELDAIKE) adopt a coiled-coil conformation. Residues 315–343 (RKWSESKLGTELLRAVEKAGYKEPSPIQM) carry the Q motif motif. Residues 346 to 541 (IPLGLQQRDV…RKYLRNPVVV (196 aa)) form the Helicase ATP-binding domain. Position 359–366 (359–366 (AETGSGKT)) interacts with ATP. The DEAD box motif lies at 472–475 (DEAD). In terms of domain architecture, Helicase C-terminal spans 568–712 (RLQKILTDLG…PVPPELARHE (145 aa)). The disordered stretch occupies residues 704–736 (VPPELARHEASKFKPGSVPDRPPRRNDTVYATH).

This sequence belongs to the DEAD box helicase family. DDX23/PRP28 subfamily.

Its subcellular location is the cytoplasm. The protein resides in the nucleus. The enzyme catalyses ATP + H2O = ADP + phosphate + H(+). ATP-dependent RNA helicase involved in mRNA splicing. May destabilize the U1/5'-splice site duplex to permit an effective competition for the 5'-splice site by the U6 snRNA, resulting in the switch between U1 and U6 at the 5'-splice site. May also act to unwind the U4/U6 base-pairing interaction in the U4/U6/U5 snRNP, facilitating the first covalent step of splicing. In Oryza sativa subsp. japonica (Rice), this protein is DEAD-box ATP-dependent RNA helicase 21.